A 136-amino-acid polypeptide reads, in one-letter code: Phospholipase A2 (136 aa).

Residues tryptophan 8, glycine 10, and glycine 12 each coordinate Ca(2+). 5 cysteine pairs are disulfide-bonded: cysteine 9–cysteine 31, cysteine 30–cysteine 70, cysteine 37–cysteine 63, cysteine 61–cysteine 95, and cysteine 105–cysteine 115. N-linked (GlcNAc...) asparagine glycosylation is present at asparagine 16. The active site involves histidine 34. Aspartate 35 provides a ligand contact to Ca(2+). Aspartate 64 is a catalytic residue.

The protein belongs to the phospholipase A2 family. The cofactor is Ca(2+). As to expression, expressed by the venom gland.

Its subcellular location is the secreted. It carries out the reaction a 1,2-diacyl-sn-glycero-3-phosphocholine + H2O = a 1-acyl-sn-glycero-3-phosphocholine + a fatty acid + H(+). PLA2 catalyzes the calcium-dependent hydrolysis of the 2-acyl groups in 3-sn-phosphoglycerides. This chain is Phospholipase A2, found in Bombus pensylvanicus (American bumblebee).